A 324-amino-acid chain; its full sequence is NADH-quinone oxidoreductase subunit H 2 (324 aa).

Transmembrane regions (helical) follow at residues 1–21 (MIGMALTAIISTMLIMVLLVV), 77–97 (ILAPMVAATPVLAGFGVVAFG), 109–129 (VMFLLGMMGLTVYGVVLGALA), 147–167 (LGYEAFLGLSLLGVVMIAGSL), 179–199 (VWFVLLQPFGAALFCIAGVAA), 214–234 (LVAGYLTEYTGMSFGLFFLGE), 238–258 (VLLVASLAVTLFFGGWLGPVW), 263–283 (LPGPIWFGLKVGVIALIFIWI), and 298–318 (FAWKIALPLALANLLLTGLIV).

The protein belongs to the complex I subunit 1 family. In terms of assembly, NDH-1 is composed of 14 different subunits. Subunits NuoA, H, J, K, L, M, N constitute the membrane sector of the complex.

Its subcellular location is the cell inner membrane. The catalysed reaction is a quinone + NADH + 5 H(+)(in) = a quinol + NAD(+) + 4 H(+)(out). In terms of biological role, NDH-1 shuttles electrons from NADH, via FMN and iron-sulfur (Fe-S) centers, to quinones in the respiratory chain. The immediate electron acceptor for the enzyme in this species is believed to be ubiquinone. Couples the redox reaction to proton translocation (for every two electrons transferred, four hydrogen ions are translocated across the cytoplasmic membrane), and thus conserves the redox energy in a proton gradient. This subunit may bind ubiquinone. The chain is NADH-quinone oxidoreductase subunit H 2 from Rhodopseudomonas palustris (strain BisB18).